Reading from the N-terminus, the 478-residue chain is Ribulose bisphosphate carboxylase large chain (478 aa).

Positions 1-2 are excised as a propeptide; it reads MS. Proline 3 is modified (N-acetylproline). An N6,N6,N6-trimethyllysine modification is found at lysine 14. Substrate contacts are provided by asparagine 123 and threonine 173. Lysine 175 acts as the Proton acceptor in catalysis. Lysine 177 contributes to the substrate binding site. Lysine 201, aspartate 203, and glutamate 204 together coordinate Mg(2+). Lysine 201 carries the post-translational modification N6-carboxylysine. The active-site Proton acceptor is the histidine 294. Substrate contacts are provided by arginine 295, histidine 327, and serine 379.

Belongs to the RuBisCO large chain family. Type I subfamily. Heterohexadecamer of 8 large chains and 8 small chains; disulfide-linked. The disulfide link is formed within the large subunit homodimers. It depends on Mg(2+) as a cofactor. Post-translationally, the disulfide bond which can form in the large chain dimeric partners within the hexadecamer appears to be associated with oxidative stress and protein turnover.

It localises to the plastid. It is found in the chloroplast. It carries out the reaction 2 (2R)-3-phosphoglycerate + 2 H(+) = D-ribulose 1,5-bisphosphate + CO2 + H2O. The catalysed reaction is D-ribulose 1,5-bisphosphate + O2 = 2-phosphoglycolate + (2R)-3-phosphoglycerate + 2 H(+). RuBisCO catalyzes two reactions: the carboxylation of D-ribulose 1,5-bisphosphate, the primary event in carbon dioxide fixation, as well as the oxidative fragmentation of the pentose substrate in the photorespiration process. Both reactions occur simultaneously and in competition at the same active site. This chain is Ribulose bisphosphate carboxylase large chain, found in Neurachne munroi.